The chain runs to 360 residues: Phenylalanine--tRNA ligase alpha subunit (360 aa).

Position 260 (Glu260) interacts with Mg(2+).

It belongs to the class-II aminoacyl-tRNA synthetase family. Phe-tRNA synthetase alpha subunit type 1 subfamily. As to quaternary structure, tetramer of two alpha and two beta subunits. Mg(2+) serves as cofactor.

Its subcellular location is the cytoplasm. The enzyme catalyses tRNA(Phe) + L-phenylalanine + ATP = L-phenylalanyl-tRNA(Phe) + AMP + diphosphate + H(+). The sequence is that of Phenylalanine--tRNA ligase alpha subunit from Cereibacter sphaeroides (strain ATCC 17029 / ATH 2.4.9) (Rhodobacter sphaeroides).